The primary structure comprises 138 residues: ATP synthase epsilon chain (138 aa).

Belongs to the ATPase epsilon chain family. As to quaternary structure, F-type ATPases have 2 components, CF(1) - the catalytic core - and CF(0) - the membrane proton channel. CF(1) has five subunits: alpha(3), beta(3), gamma(1), delta(1), epsilon(1). CF(0) has three main subunits: a, b and c.

The protein localises to the cell membrane. In terms of biological role, produces ATP from ADP in the presence of a proton gradient across the membrane. The chain is ATP synthase epsilon chain from Streptococcus uberis (strain ATCC BAA-854 / 0140J).